Reading from the N-terminus, the 239-residue chain is Ribosomal RNA small subunit methyltransferase G (239 aa).

Residues Gly-75, Leu-80, 126–127 (AE), and Arg-142 contribute to the S-adenosyl-L-methionine site.

Belongs to the methyltransferase superfamily. RNA methyltransferase RsmG family.

It is found in the cytoplasm. Its function is as follows. Specifically methylates the N7 position of guanine in position 518 of 16S rRNA. This chain is Ribosomal RNA small subunit methyltransferase G, found in Streptomyces coelicolor (strain ATCC BAA-471 / A3(2) / M145).